Reading from the N-terminus, the 502-residue chain is Probable glycine dehydrogenase (decarboxylating) subunit 2 (502 aa).

K273 carries the N6-(pyridoxal phosphate)lysine modification.

This sequence belongs to the GcvP family. C-terminal subunit subfamily. In terms of assembly, the glycine cleavage system is composed of four proteins: P, T, L and H. In this organism, the P 'protein' is a heterodimer of two subunits. Pyridoxal 5'-phosphate serves as cofactor.

The enzyme catalyses N(6)-[(R)-lipoyl]-L-lysyl-[glycine-cleavage complex H protein] + glycine + H(+) = N(6)-[(R)-S(8)-aminomethyldihydrolipoyl]-L-lysyl-[glycine-cleavage complex H protein] + CO2. Functionally, the glycine cleavage system catalyzes the degradation of glycine. The P protein binds the alpha-amino group of glycine through its pyridoxal phosphate cofactor; CO(2) is released and the remaining methylamine moiety is then transferred to the lipoamide cofactor of the H protein. The protein is Probable glycine dehydrogenase (decarboxylating) subunit 2 of Pyrococcus horikoshii (strain ATCC 700860 / DSM 12428 / JCM 9974 / NBRC 100139 / OT-3).